Here is a 384-residue protein sequence, read N- to C-terminus: MNPQFRNMVDGMDPHKFSYNFKNRPILSRRNTVWLCYEVKTKGPSRPPLDAKIFRGQVYFELKNHPEMRFFHWFSKWRKLHRDQECEVTWYMSWSPCTKCTRNVATFLAEDPKVTLTIFVARLYYFWDPDYQEALRSLCQERDGPRANMKIMNYDEFQHCWNKFVYSQRELFEPWNNLPKYYIVLHIILGEILRHSMDPLTFTSNFNNEPCVEGRHETYLCYKVERLHNDTWVLLNQRRGFLCNQAPAIHGFPEGRHAELCFLDVIPFWKLDGKQRYRVTCFTSWSPCFRCAQEMAKFISNNQHVSLCIFAARIYDDQGRCKEGLRTLDEAEAKISIMTYDEFQHCWDTFVDHQGRPFLPWIRLHEHSEALSGRLRAILLNQGN.

Positions 1 to 60 are essential for cytoplasmic localization; the sequence is MNPQFRNMVDGMDPHKFSYNFKNRPILSRRNTVWLCYEVKTKGPSRPPLDAKIFRGQVYF. CMP/dCMP-type deaminase domains follow at residues 29-138 and 214-328; these read RRNT…LRSL and GRHE…LRTL. A Phosphothreonine; by PKA modification is found at Thr-32. Zn(2+)-binding residues include His-65, Cys-97, and Cys-100. Residues 209–336 form a necessary for homooligomerization region; the sequence is EPCVEGRHET…TLDEAEAKIS (128 aa). Residues 213 to 215 are interaction with DNA; sequence EGR. Thr-218 is modified (phosphothreonine; by PKA and CAMK2). His-257 contributes to the Zn(2+) binding site. The Proton donor role is filled by Glu-259. The Zn(2+) site is built by Cys-288 and Cys-291. Positions 313 to 320 are interaction with DNA; sequence RIYDDQGR.

Belongs to the cytidine and deoxycytidylate deaminase family. Homodimer. Zn(2+) serves as cofactor.

It is found in the cytoplasm. The protein localises to the nucleus. The protein resides in the P-body. It catalyses the reaction a 2'-deoxycytidine in single-stranded DNA + H2O + H(+) = a 2'-deoxyuridine in single-stranded DNA + NH4(+). DNA deaminase (cytidine deaminase) which acts as an inhibitor of retrovirus replication and retrotransposon mobility. After the penetration of retroviral nucleocapsids into target cells of infection and the initiation of reverse transcription, it can induce the conversion of cytosine to uracil in the minus-sense single-strand viral DNA, leading to G-to-A hypermutations in the subsequent plus-strand viral DNA. The resultant detrimental levels of mutations in the proviral genome, along with a deamination-independent mechanism that works prior to the proviral integration, together exert efficient antiretroviral effects in infected target cells. Selectively targets single-stranded DNA and does not deaminate double-stranded DNA or single- or double-stranded RNA. The chain is DNA dC-&gt;dU-editing enzyme APOBEC-3G (APOBEC3G) from Pongo pygmaeus (Bornean orangutan).